Here is a 248-residue protein sequence, read N- to C-terminus: Pyridoxine 5'-phosphate synthase (248 aa).

Asn7 contributes to the 3-amino-2-oxopropyl phosphate binding site. 9–10 serves as a coordination point for 1-deoxy-D-xylulose 5-phosphate; that stretch reads DH. Residue Arg18 coordinates 3-amino-2-oxopropyl phosphate. His43 functions as the Proton acceptor in the catalytic mechanism. 1-deoxy-D-xylulose 5-phosphate-binding residues include Arg45 and His50. Glu70 functions as the Proton acceptor in the catalytic mechanism. Thr100 is a binding site for 1-deoxy-D-xylulose 5-phosphate. Residue His191 is the Proton donor of the active site. Residues Gly192 and 213–214 each bind 3-amino-2-oxopropyl phosphate; that span reads GH.

The protein belongs to the PNP synthase family. Homooctamer; tetramer of dimers.

The protein resides in the cytoplasm. It carries out the reaction 3-amino-2-oxopropyl phosphate + 1-deoxy-D-xylulose 5-phosphate = pyridoxine 5'-phosphate + phosphate + 2 H2O + H(+). It functions in the pathway cofactor biosynthesis; pyridoxine 5'-phosphate biosynthesis; pyridoxine 5'-phosphate from D-erythrose 4-phosphate: step 5/5. In terms of biological role, catalyzes the complicated ring closure reaction between the two acyclic compounds 1-deoxy-D-xylulose-5-phosphate (DXP) and 3-amino-2-oxopropyl phosphate (1-amino-acetone-3-phosphate or AAP) to form pyridoxine 5'-phosphate (PNP) and inorganic phosphate. This chain is Pyridoxine 5'-phosphate synthase, found in Bordetella bronchiseptica (strain ATCC BAA-588 / NCTC 13252 / RB50) (Alcaligenes bronchisepticus).